Here is a 512-residue protein sequence, read N- to C-terminus: Maturase K (512 aa).

This sequence belongs to the intron maturase 2 family. MatK subfamily.

Its subcellular location is the plastid. It localises to the chloroplast. Functionally, usually encoded in the trnK tRNA gene intron. Probably assists in splicing its own and other chloroplast group II introns. This chain is Maturase K, found in Dalea wrightii (Wright's prairie clover).